A 406-amino-acid polypeptide reads, in one-letter code: Dematin (406 aa).

2 disordered regions span residues 1 to 30 and 78 to 333; these read MERL…PSSI and LPRS…DRGN. Positions 11–29 are enriched in low complexity; the sequence is SPGSVSSSRDSSVPGSPSS. Residues S16, S18, S26, S92, S96, S105, S110, S113, S157, and S227 each carry the phosphoserine modification. A compositionally biased stretch (polar residues) spans 105-114; it reads SPGTISQASA. Acidic residues predominate over residues 217–228; sequence EEEEEEEDDDSG. The interval 225–309 is interaction with RASGRF2; the sequence is DDSGEEMKAL…SRLQSTDFSP (85 aa). Composition is skewed to basic and acidic residues over residues 229–243 and 253–262; these read EEMK…EELS and ILKEEMEKSL. Phosphoserine is present on residues S270, S280, S290, S304, S316, S334, S373, and S384. Residues 282 to 323 show a composition bias toward polar residues; sequence HAGTSKSSSLPAYGRTTLSRLQSTDFSPSGSEAESPGLQNGE. The 69-residue stretch at 338 to 406 folds into the HP domain; sequence VLEQKIYPYE…NELKKKASLF (69 aa). S404 carries the phosphoserine; by PKA modification.

This sequence belongs to the villin/gelsolin family. As to quaternary structure, monomeric; under reducing conditions. Self-associates. Exists under oxidizing condition as a trimer linked by disulfide bonds. Found in a complex with DMTN, F-actin and spectrin. Found in a complex with ADD2, DMTN and SLC2A1. Interacts with F-actin, ITPKB and spectrin. Interacts with SLC2A1 (via C-terminus cytoplasmic region). Interacts with RASGRF2. In terms of processing, phosphorylated. Phosphorylation at Ser-404 by PKA causes the C-terminal headpiece domain to associate with the N-terminal core domain, and leads to the inhibition of its actin bundling activity.

Its subcellular location is the cytoplasm. The protein resides in the cytosol. The protein localises to the perinuclear region. It localises to the cytoskeleton. It is found in the cell membrane. Its subcellular location is the membrane. The protein resides in the endomembrane system. The protein localises to the cell projection. In terms of biological role, membrane-cytoskeleton-associated protein with F-actin-binding activity that induces F-actin bundles formation and stabilization. Its F-actin-bundling activity is reversibly regulated upon its phosphorylation by the cAMP-dependent protein kinase A (PKA). Binds to the erythrocyte membrane glucose transporter-1 SLC2A1/GLUT1, and hence stabilizes and attaches the spectrin-actin network to the erythrocytic plasma membrane. Plays a role in maintaining the functional integrity of PKA-activated erythrocyte shape and the membrane mechanical properties. Also plays a role as a modulator of actin dynamics in fibroblasts; acts as a negative regulator of the RhoA activation pathway. In platelets, functions as a regulator of internal calcium mobilization across the dense tubular system that affects platelet granule secretion pathways and aggregation. Also required for the formation of a diverse set of cell protrusions, such as filopodia and lamellipodia, necessary for platelet cell spreading, motility and migration. Acts as a tumor suppressor and inhibits malignant cell transformation. The polypeptide is Dematin (DMTN) (Bos taurus (Bovine)).